Reading from the N-terminus, the 178-residue chain is Cytochrome b6-f complex iron-sulfur subunit 1 (178 aa).

The helical transmembrane segment at 17–36 threads the bilayer; sequence LLNFLAGTTVAVTASAGAYA. The Rieske domain occupies 61–161; sequence GNPIPASQIL…VAVVDDQIFI (101 aa). [2Fe-2S] cluster-binding residues include Cys-107, His-109, Cys-125, and His-128. An intrachain disulfide couples Cys-112 to Cys-127.

Belongs to the Rieske iron-sulfur protein family. In terms of assembly, the 4 large subunits of the cytochrome b6-f complex are cytochrome b6, subunit IV (17 kDa polypeptide, PetD), cytochrome f and the Rieske protein, while the 4 small subunits are PetG, PetL, PetM and PetN. The complex functions as a dimer. The cofactor is [2Fe-2S] cluster.

It is found in the cellular thylakoid membrane. It catalyses the reaction 2 oxidized [plastocyanin] + a plastoquinol + 2 H(+)(in) = 2 reduced [plastocyanin] + a plastoquinone + 4 H(+)(out). Component of the cytochrome b6-f complex, which mediates electron transfer between photosystem II (PSII) and photosystem I (PSI), cyclic electron flow around PSI, and state transitions. In Synechocystis sp. (strain ATCC 27184 / PCC 6803 / Kazusa), this protein is Cytochrome b6-f complex iron-sulfur subunit 1.